The following is a 456-amino-acid chain: Phosphomannomutase (456 aa).

The active-site Phosphoserine intermediate is the Ser-98. Mg(2+) contacts are provided by Ser-98, Asp-245, Asp-247, and Asp-249.

Belongs to the phosphohexose mutase family. It depends on Mg(2+) as a cofactor.

It catalyses the reaction alpha-D-mannose 1-phosphate = D-mannose 6-phosphate. It participates in nucleotide-sugar biosynthesis; GDP-alpha-D-mannose biosynthesis; alpha-D-mannose 1-phosphate from D-fructose 6-phosphate: step 2/2. Its pathway is bacterial outer membrane biogenesis; LPS O-antigen biosynthesis. In terms of biological role, involved in GDP-mannose biosynthesis which serves as the activated sugar nucleotide precursor for mannose residues in cell surface polysaccharides. This enzyme participates in synthesis of the LPS O antigen. This chain is Phosphomannomutase (manB), found in Salmonella montevideo.